The sequence spans 157 residues: MRIGHGFDVHRFGGEGPLIIGGVRIAHPQGLLAHSDGDVALHAATDALLGAAALGDIGKLFPDTDPAYKGADSRALLREAYRSIRARGYRLGNLDITLIAQAPKMAPHIPQMRVFLAEDLQCPIDDVNVKATTTEKLGFTGRGEGIACAAVALLIKE.

The a divalent metal cation site is built by Asp-8 and His-10. 4-CDP-2-C-methyl-D-erythritol 2-phosphate contacts are provided by residues 8-10 (DVH) and 34-35 (HS). Residue His-42 participates in a divalent metal cation binding. Residues 56–58 (DIG), 61–65 (FPDTD), 100–106 (AQAPKMA), 132–135 (TTTE), Phe-139, and Arg-142 contribute to the 4-CDP-2-C-methyl-D-erythritol 2-phosphate site.

Belongs to the IspF family. Homotrimer. A divalent metal cation is required as a cofactor.

The enzyme catalyses 4-CDP-2-C-methyl-D-erythritol 2-phosphate = 2-C-methyl-D-erythritol 2,4-cyclic diphosphate + CMP. The protein operates within isoprenoid biosynthesis; isopentenyl diphosphate biosynthesis via DXP pathway; isopentenyl diphosphate from 1-deoxy-D-xylulose 5-phosphate: step 4/6. Involved in the biosynthesis of isopentenyl diphosphate (IPP) and dimethylallyl diphosphate (DMAPP), two major building blocks of isoprenoid compounds. Catalyzes the conversion of 4-diphosphocytidyl-2-C-methyl-D-erythritol 2-phosphate (CDP-ME2P) to 2-C-methyl-D-erythritol 2,4-cyclodiphosphate (ME-CPP) with a corresponding release of cytidine 5-monophosphate (CMP). The chain is 2-C-methyl-D-erythritol 2,4-cyclodiphosphate synthase from Edwardsiella ictaluri (strain 93-146).